Here is an 897-residue protein sequence, read N- to C-terminus: Mating-type protein ALPHA3 (897 aa).

Mating type proteins are sequence specific DNA-binding proteins that act as master switches in yeast differentiation by controlling gene expression in a cell type-specific fashion. Required for efficient mating as an alpha-cell. The chain is Mating-type protein ALPHA3 (HMLALPHA3) from Kluyveromyces lactis (strain ATCC 8585 / CBS 2359 / DSM 70799 / NBRC 1267 / NRRL Y-1140 / WM37) (Yeast).